The primary structure comprises 294 residues: Probable 2-(5''-triphosphoribosyl)-3'-dephosphocoenzyme-A synthase (294 aa).

The protein belongs to the CitG/MdcB family.

The catalysed reaction is 3'-dephospho-CoA + ATP = 2'-(5''-triphospho-alpha-D-ribosyl)-3'-dephospho-CoA + adenine. This chain is Probable 2-(5''-triphosphoribosyl)-3'-dephosphocoenzyme-A synthase, found in Streptococcus pyogenes serotype M28 (strain MGAS6180).